The chain runs to 494 residues: Probable cobyric acid synthase (494 aa).

Positions Ser249 to Phe447 constitute a GATase cobBQ-type domain. Cys331 acts as the Nucleophile in catalysis. Residue His439 is part of the active site.

This sequence belongs to the CobB/CobQ family. CobQ subfamily.

It participates in cofactor biosynthesis; adenosylcobalamin biosynthesis. Catalyzes amidations at positions B, D, E, and G on adenosylcobyrinic A,C-diamide. NH(2) groups are provided by glutamine, and one molecule of ATP is hydrogenolyzed for each amidation. In Methanopyrus kandleri (strain AV19 / DSM 6324 / JCM 9639 / NBRC 100938), this protein is Probable cobyric acid synthase.